A 328-amino-acid chain; its full sequence is 2-oxoglutarate-dependent dioxygenase gloE (328 aa).

A Fe2OG dioxygenase domain is found at 170-271 (TRTNLTFLKY…RYTLAYFLRP (102 aa)). Fe cation is bound by residues His194, Asp196, and His249. Arg262 is a binding site for 2-oxoglutarate.

The protein belongs to the iron/ascorbate-dependent oxidoreductase family. Fe(2+) is required as a cofactor.

It functions in the pathway mycotoxin biosynthesis. Functionally, 2-oxoglutarate-dependent dioxygenase; part of the gene cluster that mediates the biosynthesis of pneumocandins, lipohexapeptides of the echinocandin family that prevent fungal cell wall formation by non-competitive inhibition of beta-1,3-glucan synthase. The 10,12-dimethylmyristoyl side chain is synthesized by the reducing polyketide synthase gloL/GLPKS4. The thioesterase gloN/GLHYD exclusively interacts with gloL/GLPKS4 to maintain turnover of the polyketide side chain. The 10R,12S-dimethylmyristic acid is then transferred to the first thiolation domain of the nonribosomal peptide synthetase gloA/GLNRPS4 by the acyl-AMP ligase gloD/GLligase, followed by its acylation to L-ornithine to trigger elongation of the cyclic hexapeptide. L-ornithine, 4R-hydroxyl-L-proline (generated from L-proline by the dioxygenase gloF/GLOXY2), 3S-hydroxyl-L-homotyrosine (generated by gloG/GLHtyB, gloH/GLHtyA, gloI/GLHtyC, gloJ/GLHtyD and hydroxylated at C-3 by the dioxygenase gloM/GLOXY1), 3R-hydroxyl-L-glutamine (generated from L-glutamine probably by the dioxygenase gloE/GLOXY3) and 3S-hydroxyl-L-proline (generated from L-proline by the dioxygenase gloF/GLOXY2 to yield pneumocandin B0), or 3S-hydroxyl-4S-methyl-L-proline (generated from L-leucine by the dioxygenase gloC/GLOXY4 to yield pneumocandin A0) are sequentially added to the growing chain. The last C domain of gloA/GLNRPS4 is proposed to be responsible for cyclization by condensation to form the peptide bond between L-ornithine and 3S-hydroxyl-4S-methyl-L-proline (for pneumocandin A0) or 3S-hydroxyl-L-proline (for pneumocandin B0). Finally, the subsequent C-4 hydroxylation of 3S-hydroxyl-L-homotyrosine and L-ornithine dihydroxylation at C-4 and C-5 are performed by the cytochrome P450 monooxygenases gloP/GLP450-1 and gloO/GLP450-2, respectively. In Glarea lozoyensis (strain ATCC 20868 / MF5171), this protein is 2-oxoglutarate-dependent dioxygenase gloE.